A 333-amino-acid chain; its full sequence is GTP 3',8-cyclase (333 aa).

A Radical SAM core domain is found at 7–221; the sequence is KFGRVHDYIR…FEACDAIGFE (215 aa). Residue R16 participates in GTP binding. Residues C23 and C27 each coordinate [4Fe-4S] cluster. An S-adenosyl-L-methionine-binding site is contributed by Y29. Residue C30 participates in [4Fe-4S] cluster binding. R66 serves as a coordination point for GTP. S-adenosyl-L-methionine is bound at residue G70. GTP is bound at residue T97. S121 contributes to the S-adenosyl-L-methionine binding site. K158 is a binding site for GTP. Position 192 (M192) interacts with S-adenosyl-L-methionine. [4Fe-4S] cluster-binding residues include C257 and C260. A GTP-binding site is contributed by 262–264; it reads RLR. C274 contributes to the [4Fe-4S] cluster binding site.

The protein belongs to the radical SAM superfamily. MoaA family. As to quaternary structure, monomer and homodimer. The cofactor is [4Fe-4S] cluster.

The catalysed reaction is GTP + AH2 + S-adenosyl-L-methionine = (8S)-3',8-cyclo-7,8-dihydroguanosine 5'-triphosphate + 5'-deoxyadenosine + L-methionine + A + H(+). It functions in the pathway cofactor biosynthesis; molybdopterin biosynthesis. Functionally, catalyzes the cyclization of GTP to (8S)-3',8-cyclo-7,8-dihydroguanosine 5'-triphosphate. The chain is GTP 3',8-cyclase from Listeria welshimeri serovar 6b (strain ATCC 35897 / DSM 20650 / CCUG 15529 / CIP 8149 / NCTC 11857 / SLCC 5334 / V8).